Reading from the N-terminus, the 149-residue chain is MQLILLQKVTNLGNLGDLVDVKPGYGRNFLVPQGKAVPATESNKAEFEAKRAEYEAKAQAIHADAEGRKAKLEGASVTIAANASTEGKLYGSVGPRDIAEAFTAAGLPLEKSEVILGEGAFRNIGEYDVLVHLHADVETTVKVVVVAEA.

This sequence belongs to the bacterial ribosomal protein bL9 family.

Binds to the 23S rRNA. This chain is Large ribosomal subunit protein bL9, found in Stenotrophomonas maltophilia (strain K279a).